The primary structure comprises 1946 residues: MSGYQGGHHDQYDQGYGQAGHGDGYYQDDQYYDQGHGDHAAQGDHAAQGDHGAQGTQGDGYYDESGYYHADANNPYHQDGGYYDGHDQYQDDYYNNNQGYYDGEYNQGYAQGGRHPSEEESETFSDFTMRSDMARAAEMDYYGRGDEQYNGYGEGGRGYRPPSSQLSYGGNRSSGASTPNYGMEYGNGLASQRSKEPYPAWTSDAQIPLSKEEIEDIFLDLTSKFGFQRDSMRNMYDHLMTLLDSRASRMTPNQALLSLHADYIGGDNANYRKWYFAAHLDLDDAVGFANASTKNRKRKAKKGKKKGGEAGNEAETLQELEGDDSLEAAEYRWKTRMNRMSQYDRVRQIALYLLCWGEANQVRFMPECLCFIFKCADDYLNSPACQALVEPVEEFTFLNNVITPLYQYCRDQGYEILNGVYVRRERDHKHIIGYDDCNQLFWYPEGIERIVLEDKSKLVDLPPAERYLKLKEVNWKKCFFKTYKESRSWFHLLLNFNRIWVIHLTMFWFYTSHNAPSLITYQYEQQKDNQPPASKQFSIVGFGGAIASLIQIFATLAEWVYVPRRWAGAQHLTKRLLFLIVILVLNVAPGVKVFMFHGNKDGKDADQKNKDTPIDKAIGIVHFVIAVFTFLFFSVMPLGGLLGSYLTKKSRRYVASQTFTASYPRLTGNDMAMSFGLWLTVFGAKFGESYVYLTLSFRDPIRYLSIMKIDCLGDAMFGSTAATQQILCKHQPTIVLILMTFTDLIFFFLDTYLFYVILNTVFSIARSFYIGSSIWTPWRNIFSRLPKRIYSKVLATTDMEIKYKPKVLISQVWNAIVISMYREHLLAIDHVQKLLYHQVPSEQEGKRTLRAPTFFVSQEDHSFKTEFFPSHSEAERRISFFAQSLSTPIPEPVPVDNMPTFTVMIPHYSEKILLSLREIIREDEPYSRVTLLEYLKQLHPHEWECFVKDTKILADETAQMNGEPEKSEKDTAKSKIDDLPFYCIGFKSSAPEYTLRTRIWASLRSQTLYRTVSGFMNYSRAIKLLYRVENPEVVQMFGGNSEKLERELERMARRKFKLVVSMQRYSKFKKEEMENAEFLLRAYPDLQIAYLDEEPPLAEGEEPRLYSALIDGHSELMENGMRRPKFRVQLSGNPVLGDGKSDNQNHAIIFYRGEYIQLIDANQDNYLEECLKIRSVLAEFEEMKPDNHSPYTPGVKNDVHTPVAILGAREYIFSENIGILGDVAAGKEQTFGTLFARTMAQVGGKLHYGHPDFLNGIFMTTRGGVSKAQKGLHLNEDIFAGMNALVRGGRIKHCEYYQCGKGRDLGFGSILNFTTKIGTGMGEQWLSREYYYLGTQLPLDRFLSFYYAHAGFHVNNMFIMLSVQSFMLTLMSIGALRHETIRCDYNPQKPITDPLYPTKCSNTDELMGWVYRCIISIFFVFFISFVPLIVQELTERGVWRAALRFIKQFCSLSPFFEVFVCQIYANSVQSDLAFGGARYIGTGRGFATARIPFGVLYSRFAGQSIYFGARLLMMLLFATSTAWQPALTYFWIVLLGLIISPFLYNPHQFAWTDFFIDYRDFLRWLSRGNSRAHASSWIMFCRLSRTRITGYKRKVMGDASAKMSADVPRAAVANIFLTEILTPLLLAATTTVAYLFVNAQTGVTDNDKNSSSSPGFKIGPSGALIRLAVVAFAPIGINAGVLAAMFGMACCMGPVLNMCCKKFGPVLAGIAHGAAAVFMIIFFEVMYVLEGFNFARALAGIIAAMCIQRFIFKLIVSLALTREFKTDQSNIAFWNGKWYSMGWHSVSQPAREFLCKITELSMFSADFILGHWILFMMAPLILIPQIDKIHSMMLFWLLPSRQIRPPIYSMKQSKLRRRRVIRFAILYFVLFIIFLALVVAPGVIGKKFLGDTIFKALDNGNGGPANLHLLQPWGLDNNNTEGKTETGTKAGGADASATDASKLRLF.

Disordered regions lie at residues 1 to 127 (MSGY…FSDF) and 152 to 198 (YGEG…KEPY). Low complexity-rich tracts occupy residues 24 to 34 (GYYQDDQYYDQ), 43 to 60 (GDHA…QGDG), and 91 to 109 (DDYY…NQGY). Over residues 165 to 180 (QLSYGGNRSSGASTPN) the composition is skewed to polar residues. Residues Asn-171 and Asn-290 are each glycosylated (N-linked (GlcNAc...) asparagine). Residues 297–316 (KRKAKKGKKKGGEAGNEAET) form a disordered region. Helical transmembrane passes span 489–509 (WFHL…MFWF), 537–557 (FSIV…ATLA), 576–596 (LLFL…VFMF), 618–638 (IGIV…VMPL), 675–695 (FGLW…YLTL), and 734–754 (IVLI…TYLF). Residues Asn-1017 and Asn-1312 are each glycosylated (N-linked (GlcNAc...) asparagine). 5 helical membrane passes run 1356–1376 (NMFI…IGAL), 1413–1433 (CIIS…VQEL), 1500–1520 (FAGQ…FATS), 1523–1543 (WQPA…SPFL), and 1615–1635 (IFLT…VAYL). Asn-1649 is a glycosylation site (N-linked (GlcNAc...) asparagine). A run of 5 helical transmembrane segments spans residues 1667 to 1687 (LAVV…AMFG), 1703 to 1723 (FGPV…IIFF), 1738 to 1758 (LAGI…IVSL), 1803 to 1823 (FSAD…LILI), and 1864 to 1884 (AILY…PGVI). Residue Asn-1918 is glycosylated (N-linked (GlcNAc...) asparagine). The interval 1920–1946 (TEGKTETGTKAGGADASATDASKLRLF) is disordered. Residues 1925–1940 (ETGTKAGGADASATDA) are compositionally biased toward low complexity.

Belongs to the glycosyltransferase 48 family. Component of the 1,3-beta-glucan synthase (GS) complex composed of a catalytic subunit GLS1 and a regulatory subunit RHO1.

It localises to the membrane. The protein localises to the cell membrane. The enzyme catalyses [(1-&gt;3)-beta-D-glucosyl](n) + UDP-alpha-D-glucose = [(1-&gt;3)-beta-D-glucosyl](n+1) + UDP + H(+). Its activity is regulated as follows. Activated by iron ions. Inhibited by manganese, copper and zinc ions. Functionally, catalytic subunit of the 1,3-beta-glucan synthase (GS). Synthesizes 1,3-beta-glucan, a major structural component of the fungal cell wall. Involved in cell wall synthesis, maintenance and remodeling. The protein is 1,3-beta-glucan synthase component of Cordyceps militaris (strain CM01) (Caterpillar fungus).